The chain runs to 350 residues: Probable choline kinase 2 (350 aa).

Arg73, Gln210, and Asp227 together coordinate ATP.

The protein belongs to the choline/ethanolamine kinase family.

It catalyses the reaction choline + ATP = phosphocholine + ADP + H(+). It participates in phospholipid metabolism; phosphatidylcholine biosynthesis; phosphocholine from choline: step 1/1. Involved in phospholipid biosynthesis. Catalyzes the first step in phosphatidylcholine biosynthesis. This Arabidopsis thaliana (Mouse-ear cress) protein is Probable choline kinase 2.